The following is a 216-amino-acid chain: GTP cyclohydrolase 1 (216 aa).

Zn(2+) contacts are provided by C108, H111, and C179.

Belongs to the GTP cyclohydrolase I family. In terms of assembly, toroid-shaped homodecamer, composed of two pentamers of five dimers.

The enzyme catalyses GTP + H2O = 7,8-dihydroneopterin 3'-triphosphate + formate + H(+). Its pathway is cofactor biosynthesis; 7,8-dihydroneopterin triphosphate biosynthesis; 7,8-dihydroneopterin triphosphate from GTP: step 1/1. The polypeptide is GTP cyclohydrolase 1 (Shewanella sp. (strain ANA-3)).